An 87-amino-acid polypeptide reads, in one-letter code: Small ribosomal subunit protein uS17 (87 aa).

The protein belongs to the universal ribosomal protein uS17 family. As to quaternary structure, part of the 30S ribosomal subunit.

In terms of biological role, one of the primary rRNA binding proteins, it binds specifically to the 5'-end of 16S ribosomal RNA. In Neisseria meningitidis serogroup C (strain 053442), this protein is Small ribosomal subunit protein uS17.